The primary structure comprises 281 residues: Glyoxalase 1 (281 aa).

VOC domains follow at residues 4–127 (RALH…IGKA) and 132–251 (KVLR…FVGD).

This sequence belongs to the glyoxalase I family.

In terms of biological role, thought to act as a glyoxalase. May remove methylglyoxal from mitochondrial proteins. Has roles in reducing oxidative stress and increasing lifespan. This chain is Glyoxalase 1, found in Caenorhabditis briggsae.